Reading from the N-terminus, the 483-residue chain is Jacalin-related lectin 13 (483 aa).

Residues M1–D20 are disordered. Jacalin-type lectin domains are found at residues T2–W147, P150–T295, and F307–P461.

This sequence belongs to the jacalin lectin family.

This Arabidopsis thaliana (Mouse-ear cress) protein is Jacalin-related lectin 13 (JAL13).